A 419-amino-acid chain; its full sequence is Histidine--tRNA ligase (419 aa).

The protein belongs to the class-II aminoacyl-tRNA synthetase family. In terms of assembly, homodimer.

The protein localises to the cytoplasm. It carries out the reaction tRNA(His) + L-histidine + ATP = L-histidyl-tRNA(His) + AMP + diphosphate + H(+). The protein is Histidine--tRNA ligase of Thermosipho melanesiensis (strain DSM 12029 / CIP 104789 / BI429).